A 504-amino-acid polypeptide reads, in one-letter code: 26S proteasome non-ATPase regulatory subunit 5 (504 aa).

Position 2 is an N-acetylalanine (A2).

Belongs to the proteasome subunit S5B/HSM3 family. In terms of assembly, interacts with PSMC1, PSMC2, PSMD1 and PSMD6. Part of transient complex containing PSMD5, PSMC2, PSMC1 and PSMD2 formed during the assembly of the 26S proteasome.

Its function is as follows. Acts as a chaperone during the assembly of the 26S proteasome, specifically of the base subcomplex of the PA700/19S regulatory complex (RC). In the initial step of the base subcomplex assembly is part of an intermediate PSMD5:PSMC2:PSMC1:PSMD2 module which probably assembles with a PSMD10:PSMC4:PSMC5:PAAF1 module followed by dissociation of PSMD5. This chain is 26S proteasome non-ATPase regulatory subunit 5 (Psmd5), found in Mus musculus (Mouse).